The primary structure comprises 551 residues: Cytosolic Fe-S cluster assembly factor NAR1 (551 aa).

[4Fe-4S] cluster contacts are provided by Cys20, Cys57, Cys60, Cys63, Cys178, and Cys242. Positions 395 to 435 are disordered; that stretch reads DPSGHKKRSVRRVAALRSRGRKDSSSEDSTGTPSAISNALG. Residues 421–431 are compositionally biased toward polar residues; the sequence is EDSTGTPSAIS. Position 451 (Cys451) interacts with [4Fe-4S] cluster.

This sequence belongs to the NARF family.

Component of the cytosolic Fe/S protein assembly machinery. Required for maturation of extramitochondrial Fe/S proteins. May play a role in the transfer of pre-assembled Fe/S clusters to target apoproteins. The chain is Cytosolic Fe-S cluster assembly factor NAR1 (NAR1) from Candida glabrata (strain ATCC 2001 / BCRC 20586 / JCM 3761 / NBRC 0622 / NRRL Y-65 / CBS 138) (Yeast).